The sequence spans 408 residues: 8-amino-7-oxononanoate synthase (408 aa).

Arg-20 is a binding site for substrate. 117–118 is a binding site for pyridoxal 5'-phosphate; it reads GY. A substrate-binding site is contributed by His-142. The pyridoxal 5'-phosphate site is built by Ser-188, His-216, and Thr-244. Lys-247 is subject to N6-(pyridoxal phosphate)lysine. A substrate-binding site is contributed by Thr-367.

It belongs to the class-II pyridoxal-phosphate-dependent aminotransferase family. BioF subfamily. In terms of assembly, homodimer. The cofactor is pyridoxal 5'-phosphate.

The enzyme catalyses 6-carboxyhexanoyl-[ACP] + L-alanine + H(+) = (8S)-8-amino-7-oxononanoate + holo-[ACP] + CO2. It functions in the pathway cofactor biosynthesis; biotin biosynthesis. Its function is as follows. Catalyzes the decarboxylative condensation of pimeloyl-[acyl-carrier protein] and L-alanine to produce 8-amino-7-oxononanoate (AON), [acyl-carrier protein], and carbon dioxide. The chain is 8-amino-7-oxononanoate synthase from Cupriavidus pinatubonensis (strain JMP 134 / LMG 1197) (Cupriavidus necator (strain JMP 134)).